A 431-amino-acid chain; its full sequence is Tyrosine--tRNA ligase (431 aa).

Tyr-34 lines the L-tyrosine pocket. The 'HIGH' region motif lies at 39 to 48 (PTADSLHIGH). Residues Tyr-171 and Gln-175 each contribute to the L-tyrosine site. The 'KMSKS' region motif lies at 231–235 (KFGKT). Residue Lys-234 coordinates ATP. Positions 353–422 (INVVEALVKT…GKYTILRRGK (70 aa)) constitute an S4 RNA-binding domain.

The protein belongs to the class-I aminoacyl-tRNA synthetase family. TyrS type 1 subfamily. As to quaternary structure, homodimer.

It is found in the cytoplasm. It catalyses the reaction tRNA(Tyr) + L-tyrosine + ATP = L-tyrosyl-tRNA(Tyr) + AMP + diphosphate + H(+). Catalyzes the attachment of tyrosine to tRNA(Tyr) in a two-step reaction: tyrosine is first activated by ATP to form Tyr-AMP and then transferred to the acceptor end of tRNA(Tyr). The protein is Tyrosine--tRNA ligase of Neisseria meningitidis serogroup C / serotype 2a (strain ATCC 700532 / DSM 15464 / FAM18).